The following is a 396-amino-acid chain: Elongation factor Tu 1 (396 aa).

In terms of domain architecture, tr-type G spans 10-206 (KPHVNVGTIG…QIDSYIPEPE (197 aa)). The tract at residues 19-26 (GHIDHGKT) is G1. 19–26 (GHIDHGKT) provides a ligand contact to GTP. Threonine 26 is a Mg(2+) binding site. Positions 60-64 (GITIA) are G2. The G3 stretch occupies residues 81–84 (DCPG). GTP-binding positions include 81–85 (DCPGH) and 136–139 (NKCD). The G4 stretch occupies residues 136 to 139 (NKCD). The G5 stretch occupies residues 174–176 (SAL).

The protein belongs to the TRAFAC class translation factor GTPase superfamily. Classic translation factor GTPase family. EF-Tu/EF-1A subfamily. As to quaternary structure, monomer.

It localises to the cytoplasm. The catalysed reaction is GTP + H2O = GDP + phosphate + H(+). Its function is as follows. GTP hydrolase that promotes the GTP-dependent binding of aminoacyl-tRNA to the A-site of ribosomes during protein biosynthesis. This is Elongation factor Tu 1 from Desulfotalea psychrophila (strain LSv54 / DSM 12343).